A 697-amino-acid chain; its full sequence is Protein Niban 3 (697 aa).

The interval 1-48 (MGPDRKEVPLSRGTQAVVVGKGRGAPGDDSSMGGRPSSPLDKQQRQHL) is disordered.

It belongs to the Niban family. As to expression, specifically expressed in B-lymphocytes.

In Homo sapiens (Human), this protein is Protein Niban 3.